Consider the following 388-residue polypeptide: MRYLTAGESHGPSLTAIIEGIPAGLTLHPADIDHELQRRQGGYGRGARMSIETDQVQISSGVRHGKTTGAPITLTVINKDHQKWLDVMAVGDIEETLKLKRRVKHPRPGHADLVGGIKYHFNDLRDALERSSARETTMRVAVGAVAKRILAELGVDMLHHILIFGGITITIPSKLSFRELQERALHSELSIVNPKQEEEIKTYIDKIKKEGDTIGGIIETIVQGVPAGLGSYVQWDKKLDAKLAQAVLSINAFKGVEFGVGFDMGFQKGSQVMDEITWTPTQGYGRQTNHLGGFEGGMTTGQLLVVKGVMKPIPTLYKPLMSVDIDSHEPYKATVERSDPTALPAAGVIMENVVATVLAKEILETFSSTTMSELQKAFSDYRAYVKQF.

Residues Arg39 and Arg45 each contribute to the NADP(+) site. FMN is bound by residues 130–132 (RSS), 251–252 (NA), Gly296, 311–315 (KPIPT), and Arg337.

This sequence belongs to the chorismate synthase family. Homotetramer. Requires FMNH2 as cofactor.

It carries out the reaction 5-O-(1-carboxyvinyl)-3-phosphoshikimate = chorismate + phosphate. Its pathway is metabolic intermediate biosynthesis; chorismate biosynthesis; chorismate from D-erythrose 4-phosphate and phosphoenolpyruvate: step 7/7. Its function is as follows. Catalyzes the anti-1,4-elimination of the C-3 phosphate and the C-6 proR hydrogen from 5-enolpyruvylshikimate-3-phosphate (EPSP) to yield chorismate, which is the branch point compound that serves as the starting substrate for the three terminal pathways of aromatic amino acid biosynthesis. This reaction introduces a second double bond into the aromatic ring system. In Streptococcus pyogenes serotype M2 (strain MGAS10270), this protein is Chorismate synthase.